We begin with the raw amino-acid sequence, 329 residues long: ATP phosphoribosyltransferase regulatory subunit (329 aa).

The protein belongs to the class-II aminoacyl-tRNA synthetase family. HisZ subfamily. As to quaternary structure, heteromultimer composed of HisG and HisZ subunits.

The protein localises to the cytoplasm. Its pathway is amino-acid biosynthesis; L-histidine biosynthesis; L-histidine from 5-phospho-alpha-D-ribose 1-diphosphate: step 1/9. In terms of biological role, required for the first step of histidine biosynthesis. May allow the feedback regulation of ATP phosphoribosyltransferase activity by histidine. This is ATP phosphoribosyltransferase regulatory subunit from Streptococcus gordonii (strain Challis / ATCC 35105 / BCRC 15272 / CH1 / DL1 / V288).